The following is a 390-amino-acid chain: GTPase Obg (390 aa).

Positions 1 to 159 (MKFIDESLIR…RDLLLELMLL (159 aa)) constitute an Obg domain. The region spanning 160-333 (ADVGMLGLPN…LCRDIMDFII (174 aa)) is the OBG-type G domain. Residues 166 to 173 (GLPNAGKS), 191 to 195 (FTTLV), 213 to 216 (DIPG), 283 to 286 (NKID), and 314 to 316 (SAA) each bind GTP. 2 residues coordinate Mg(2+): S173 and T193. A disordered region spans residues 363–382 (EHQFDDDEDWDDDWSEEDDE). The segment covering 366-382 (FDDDEDWDDDWSEEDDE) has biased composition (acidic residues).

Belongs to the TRAFAC class OBG-HflX-like GTPase superfamily. OBG GTPase family. In terms of assembly, monomer. Requires Mg(2+) as cofactor.

It is found in the cytoplasm. In terms of biological role, an essential GTPase which binds GTP, GDP and possibly (p)ppGpp with moderate affinity, with high nucleotide exchange rates and a fairly low GTP hydrolysis rate. Plays a role in control of the cell cycle, stress response, ribosome biogenesis and in those bacteria that undergo differentiation, in morphogenesis control. The sequence is that of GTPase Obg from Haemophilus influenzae (strain ATCC 51907 / DSM 11121 / KW20 / Rd).